A 122-amino-acid chain; its full sequence is Selenoprotein H (122 aa).

At Lys-20 the chain carries N6-acetyllysine. Residues Cys-41 to Sec-44 constitute a cross-link (cysteinyl-selenocysteine (Cys-Sec); redox-active). Residue Sec-44 is a non-standard amino acid, selenocysteine.

This sequence belongs to the SelWTH family.

Its function is as follows. May be involved in a redox-related process. This Macaca fascicularis (Crab-eating macaque) protein is Selenoprotein H.